We begin with the raw amino-acid sequence, 103 residues long: Defensin-like protein 290 (103 aa).

A signal peptide spans Met-1–Ala-29. Intrachain disulfides connect Cys-33–Cys-50, Cys-39–Cys-55, Cys-43–Cys-57, Cys-72–Cys-92, Cys-78–Cys-98, and Cys-84–Cys-100.

The protein belongs to the DEFL family.

The protein localises to the secreted. This is Defensin-like protein 290 from Arabidopsis thaliana (Mouse-ear cress).